A 36-amino-acid polypeptide reads, in one-letter code: Trypsin inhibitor 2 (36 aa).

3 disulfides stabilise this stretch: Cys-3–Cys-20, Cys-10–Cys-24, and Cys-19–Cys-35.

Functionally, trypsin inhibitor. This Spinacia oleracea (Spinach) protein is Trypsin inhibitor 2.